A 209-amino-acid polypeptide reads, in one-letter code: Urease accessory protein UreE (209 aa).

Residues 170 to 196 (EHHGHSHSHSHDHDHDHDHDHDHDHQH) show a composition bias toward basic and acidic residues. Residues 170-209 (EHHGHSHSHSHDHDHDHDHDHDHDHQHGPSCSHGHHHGHR) are disordered.

It belongs to the UreE family.

It localises to the cytoplasm. Involved in urease metallocenter assembly. Binds nickel. Probably functions as a nickel donor during metallocenter assembly. This is Urease accessory protein UreE from Burkholderia mallei (strain NCTC 10247).